A 374-amino-acid chain; its full sequence is MTARPSVSVYSASEDKVVGTCSLPAVFTAPIRHDVVQFVHTNMAKNSRQPYAVNRLSGMKHSTESWGTGRAVARIPRIHGGGTSMSGAGAFGNMCRGGRMFAPTKIFRRWHRKINLHQKRFAVVSALAASSLPALVMSRGHKIENVAEVPLVVEDGVRAYEKTKEAMTFLKTVGAIDDVNRVNDSRQIRAGRGKMRNRRYVARRGPMLVMPDNKGTRAFRNIFGLDLANVNSLNLLHLAPGGHVGRFIIWTKSAFEKLDKIFGTFTEPSTVKSGFMLPAPMLTSTDVTRIMQSEEVRRVLKPKKLQPKRPSRYRQPTNGIRNRRLRLRLNPFQKKEKAMAKGMQNKKNREARHAAKVVRLAKARKNVAKALKKK.

The tract at residues Glu336–Ala355 is disordered.

The protein belongs to the universal ribosomal protein uL4 family.

This chain is Large ribosomal subunit protein uL4 (RPL4), found in Trypanosoma brucei brucei.